The chain runs to 456 residues: MAFAETNPAASSLPNGDCGRPRARPGGNRVTVVLGAQWGDEGKGKVVDLLAQDADIVCRCQGGNNAGHTVVVDSVEYDFHLLPSGIINPNVTAFIGNGVVIHLPGLFEEAEKNVQKGKGLEGWEKRLIISDRAHIVFDFHQAADGIQEQQRQEQAGKNLGTTKKGIGPVYSSKAARSGLRMCDLVSDFDGFSERFKVLANQYKSIYPTLEIDIEGELQKLKGYMERIKPMVRDGVYFLYEALHGPPKKILVEGANAALLDIDFGTYPFVTSSNCTVGGVCTGLGMPPQNVGEVYGVVKAYTTRVGIGAFPTEQDNEIGELLQTRGREFGVTTGRKRRCGWLDLVLLKYAHMINGFTALALTKLDILDMFTEIKVGVAYKLDGEIIPHFPANQEVLNKVEVQYKTLPGWNTDISNARTFKELPVNAQNYVRFIEDELQIPVKWIGVGKSRESMIQLF.

The interval 1-24 is disordered; sequence MAFAETNPAASSLPNGDCGRPRAR. GTP-binding positions include 39–45 and 67–69; these read GDEGKGK and GHT. The active-site Proton acceptor is the aspartate 40. Residues aspartate 40 and glycine 67 each contribute to the Mg(2+) site. Aspartate 40 is a substrate binding site. Residues 40 to 43, 65 to 68, threonine 162, arginine 176, asparagine 255, threonine 270, and arginine 334 contribute to the IMP site; these read DEGK and NAGH. The Proton donor role is filled by histidine 68. Position 330–336 (330–336) interacts with substrate; the sequence is VTTGRKR. Residues arginine 336, 362–364, and 444–447 contribute to the GTP site; these read KLD and GVGK.

Belongs to the adenylosuccinate synthetase family. In terms of assembly, homodimer. Mg(2+) is required as a cofactor. In terms of tissue distribution, widely expressed.

It is found in the cytoplasm. The protein localises to the mitochondrion. It carries out the reaction IMP + L-aspartate + GTP = N(6)-(1,2-dicarboxyethyl)-AMP + GDP + phosphate + 2 H(+). Its pathway is purine metabolism; AMP biosynthesis via de novo pathway; AMP from IMP: step 1/2. Its activity is regulated as follows. Inhibited competitively by AMP and IMP and non-competitively by fructose 1,6-bisphosphate. Its function is as follows. Plays an important role in the de novo pathway and in the salvage pathway of purine nucleotide biosynthesis. Catalyzes the first committed step in the biosynthesis of AMP from IMP. The polypeptide is Adenylosuccinate synthetase isozyme 2 (Sus scrofa (Pig)).